A 610-amino-acid polypeptide reads, in one-letter code: Methionine--tRNA ligase (610 aa).

The 'HIGH' region signature appears at 12–22 (PYANGPRHIGH). Positions 144, 147, 157, and 160 each coordinate Zn(2+). A 'KMSKS' region motif is present at residues 348–352 (KFSSS). Serine 351 serves as a coordination point for ATP.

Belongs to the class-I aminoacyl-tRNA synthetase family. MetG type 1 subfamily. As to quaternary structure, monomer. Zn(2+) serves as cofactor.

The protein resides in the cytoplasm. It carries out the reaction tRNA(Met) + L-methionine + ATP = L-methionyl-tRNA(Met) + AMP + diphosphate. Is required not only for elongation of protein synthesis but also for the initiation of all mRNA translation through initiator tRNA(fMet) aminoacylation. This chain is Methionine--tRNA ligase, found in Corynebacterium diphtheriae (strain ATCC 700971 / NCTC 13129 / Biotype gravis).